A 197-amino-acid polypeptide reads, in one-letter code: MFIGMKSSSQLRQEALEYTYNANTPLKIYLKVCVSILDKAQLEFQKGDIFSAYVLYYRYADLIANKLSDHSELALVAERDQTVLHREEYYQLVKLELPAVLKIVEDLQKNIDLDYNKIQLSLSKNIAKQQKKPNHVSEPVLLPKTFNENRFNQSISFFNNMNSNITLENKMHGNNNNNTHQELLYPELPTLSNASYI.

The protein belongs to the RFU1 family.

The protein localises to the endosome. Inhibitor of the DOA4 deubiquitinase involved in the regulation of protein degradation by the proteasome and maintenance of a normal level of free ubiquitin. In Vanderwaltozyma polyspora (strain ATCC 22028 / DSM 70294 / BCRC 21397 / CBS 2163 / NBRC 10782 / NRRL Y-8283 / UCD 57-17) (Kluyveromyces polysporus), this protein is Regulator of free ubiquitin chains 1 (RFU1).